Consider the following 312-residue polypeptide: Large ribosomal subunit protein uL15m (312 aa).

Residues 63–89 (RIRKGRGPSSGYGKTAGRGTKGQKAHG) form a disordered region. Gly residues predominate over residues 70 to 82 (PSSGYGKTAGRGT).

Belongs to the universal ribosomal protein uL15 family. Component of the mitochondrial large ribosomal subunit (mt-LSU). Mature N.crassa 74S mitochondrial ribosomes consist of a small (37S) and a large (54S) subunit. The 37S small subunit contains a 16S ribosomal RNA (16S mt-rRNA) and 32 different proteins. The 54S large subunit contains a 23S rRNA (23S mt-rRNA) and 42 different proteins.

The protein localises to the mitochondrion. Component of the mitochondrial ribosome (mitoribosome), a dedicated translation machinery responsible for the synthesis of mitochondrial genome-encoded proteins, including at least some of the essential transmembrane subunits of the mitochondrial respiratory chain. The mitoribosomes are attached to the mitochondrial inner membrane and translation products are cotranslationally integrated into the membrane. The chain is Large ribosomal subunit protein uL15m (mrpl10) from Neurospora crassa (strain ATCC 24698 / 74-OR23-1A / CBS 708.71 / DSM 1257 / FGSC 987).